The chain runs to 236 residues: 2-C-methyl-D-erythritol 4-phosphate cytidylyltransferase (236 aa).

This sequence belongs to the IspD/TarI cytidylyltransferase family. IspD subfamily.

The catalysed reaction is 2-C-methyl-D-erythritol 4-phosphate + CTP + H(+) = 4-CDP-2-C-methyl-D-erythritol + diphosphate. It participates in isoprenoid biosynthesis; isopentenyl diphosphate biosynthesis via DXP pathway; isopentenyl diphosphate from 1-deoxy-D-xylulose 5-phosphate: step 2/6. In terms of biological role, catalyzes the formation of 4-diphosphocytidyl-2-C-methyl-D-erythritol from CTP and 2-C-methyl-D-erythritol 4-phosphate (MEP). This chain is 2-C-methyl-D-erythritol 4-phosphate cytidylyltransferase, found in Paraburkholderia phymatum (strain DSM 17167 / CIP 108236 / LMG 21445 / STM815) (Burkholderia phymatum).